A 146-amino-acid chain; its full sequence is [Ribosomal protein bS18]-alanine N-acetyltransferase (146 aa).

The N-acetyltransferase domain maps to 2 to 146 (SIISQIEACD…ENAVVMACYL (145 aa)). An acetyl-CoA-binding site is contributed by 69 to 71 (IAI). Glu-103 functions as the Proton acceptor in the catalytic mechanism. Residue Asn-108 coordinates acetyl-CoA. Tyr-114 functions as the Proton donor in the catalytic mechanism.

The protein belongs to the acetyltransferase family. RimI subfamily.

Its subcellular location is the cytoplasm. The enzyme catalyses N-terminal L-alanyl-[ribosomal protein bS18] + acetyl-CoA = N-terminal N(alpha)-acetyl-L-alanyl-[ribosomal protein bS18] + CoA + H(+). Acetylates the N-terminal alanine of ribosomal protein bS18. The protein is [Ribosomal protein bS18]-alanine N-acetyltransferase of Haemophilus influenzae (strain ATCC 51907 / DSM 11121 / KW20 / Rd).